A 328-amino-acid chain; its full sequence is Biotin synthase (328 aa).

One can recognise a Radical SAM core domain in the interval Asn43–Arg272. Residues Cys58, Cys62, and Cys65 each coordinate [4Fe-4S] cluster. [2Fe-2S] cluster contacts are provided by Cys103, Cys135, Cys195, and Arg267.

Belongs to the radical SAM superfamily. Biotin synthase family. As to quaternary structure, homodimer. The cofactor is [4Fe-4S] cluster. [2Fe-2S] cluster is required as a cofactor.

It carries out the reaction (4R,5S)-dethiobiotin + (sulfur carrier)-SH + 2 reduced [2Fe-2S]-[ferredoxin] + 2 S-adenosyl-L-methionine = (sulfur carrier)-H + biotin + 2 5'-deoxyadenosine + 2 L-methionine + 2 oxidized [2Fe-2S]-[ferredoxin]. Its pathway is cofactor biosynthesis; biotin biosynthesis; biotin from 7,8-diaminononanoate: step 2/2. Catalyzes the conversion of dethiobiotin (DTB) to biotin by the insertion of a sulfur atom into dethiobiotin via a radical-based mechanism. The chain is Biotin synthase from Allorhizobium ampelinum (strain ATCC BAA-846 / DSM 112012 / S4) (Agrobacterium vitis (strain S4)).